We begin with the raw amino-acid sequence, 362 residues long: Phosphoserine aminotransferase (362 aa).

L-glutamate is bound by residues Ser9 and Arg42. Residues Gly76–Arg77, Trp102, Thr153, Asp174, and Gln197 each bind pyridoxal 5'-phosphate. Lys198 carries the post-translational modification N6-(pyridoxal phosphate)lysine. Asn239–Thr240 serves as a coordination point for pyridoxal 5'-phosphate.

This sequence belongs to the class-V pyridoxal-phosphate-dependent aminotransferase family. SerC subfamily. In terms of assembly, homodimer. Requires pyridoxal 5'-phosphate as cofactor.

The protein resides in the cytoplasm. The enzyme catalyses O-phospho-L-serine + 2-oxoglutarate = 3-phosphooxypyruvate + L-glutamate. It catalyses the reaction 4-(phosphooxy)-L-threonine + 2-oxoglutarate = (R)-3-hydroxy-2-oxo-4-phosphooxybutanoate + L-glutamate. The protein operates within amino-acid biosynthesis; L-serine biosynthesis; L-serine from 3-phospho-D-glycerate: step 2/3. It participates in cofactor biosynthesis; pyridoxine 5'-phosphate biosynthesis; pyridoxine 5'-phosphate from D-erythrose 4-phosphate: step 3/5. Functionally, catalyzes the reversible conversion of 3-phosphohydroxypyruvate to phosphoserine and of 3-hydroxy-2-oxo-4-phosphonooxybutanoate to phosphohydroxythreonine. This is Phosphoserine aminotransferase from Klebsiella pneumoniae subsp. pneumoniae (strain ATCC 700721 / MGH 78578).